The chain runs to 621 residues: Chaperone protein HscA homolog (621 aa).

It belongs to the heat shock protein 70 family.

Chaperone involved in the maturation of iron-sulfur cluster-containing proteins. Has a low intrinsic ATPase activity which is markedly stimulated by HscB. The protein is Chaperone protein HscA homolog of Azotobacter vinelandii (strain DJ / ATCC BAA-1303).